The primary structure comprises 554 residues: Hydroxylamine reductase (554 aa).

[2Fe-2S] cluster-binding residues include C3, C6, C18, and C25. Hybrid [4Fe-2O-2S] cluster contacts are provided by H252, E276, C320, C408, C436, C461, E495, and K497. C408 carries the cysteine persulfide modification.

Belongs to the HCP family. [2Fe-2S] cluster is required as a cofactor. Hybrid [4Fe-2O-2S] cluster serves as cofactor.

The protein localises to the cytoplasm. The enzyme catalyses A + NH4(+) + H2O = hydroxylamine + AH2 + H(+). Functionally, catalyzes the reduction of hydroxylamine to form NH(3) and H(2)O. This Shewanella baltica (strain OS195) protein is Hydroxylamine reductase.